A 572-amino-acid polypeptide reads, in one-letter code: Methionine--tRNA ligase (572 aa).

The 'HIGH' region motif lies at 11–21; sequence PYINGIKHLGN. 4 residues coordinate Zn(2+): Cys-143, Cys-146, Cys-156, and Cys-159. The 'KMSKS' region motif lies at 346–350; it reads QFSTS. Thr-349 provides a ligand contact to ATP.

It belongs to the class-I aminoacyl-tRNA synthetase family. MetG type 1 subfamily. As to quaternary structure, monomer. It depends on Zn(2+) as a cofactor.

The protein localises to the cytoplasm. It catalyses the reaction tRNA(Met) + L-methionine + ATP = L-methionyl-tRNA(Met) + AMP + diphosphate. Its function is as follows. Is required not only for elongation of protein synthesis but also for the initiation of all mRNA translation through initiator tRNA(fMet) aminoacylation. The protein is Methionine--tRNA ligase of Ruegeria pomeroyi (strain ATCC 700808 / DSM 15171 / DSS-3) (Silicibacter pomeroyi).